Here is a 439-residue protein sequence, read N- to C-terminus: MLDILLLRKDLDSAIARLETRKKPQAFLQVEAFQSLESERKTLQTRTEELQSRRNQLSKQVGQLKARGENADAVMAEVGGLKAELENSAARLEQIQAELHTLLVAVPNLPHESVPVGSDESGNVEVRRWSPDGQDPKPLGFPAKDHVDLGEPLGLDFDMGVKLSGSRFTVMKGPIARLHRALAQFMLDVQTREHGYTECYVPYVVNADSLRGTGQLPKFEGDLFAAKKGGQDGEPVPDNAALYLIPTSEVPLTNFVRDQVVPESELPIRLTAHTPCFRSEAGSYGRDTRGMIRQHQFDKVEMVQITHPDRSYEALEEMTGHAEAVLQKLGLPYRVMSLCTGDMGFGAAKTYDLEVWLPAQNTYREISSVSNCEAFQARRLQARFKNAQGKNELVHTLNGSGLAVGRTLVAVLENYQQADGSVAVPEALRPYLGGDSVLR.

Residue threonine 247 to glutamate 249 participates in L-serine binding. Arginine 278–glutamate 280 is a binding site for ATP. Residue glutamate 301 participates in L-serine binding. Glutamate 365–serine 368 contacts ATP. Serine 400 contacts L-serine.

This sequence belongs to the class-II aminoacyl-tRNA synthetase family. Type-1 seryl-tRNA synthetase subfamily. In terms of assembly, homodimer. The tRNA molecule binds across the dimer.

Its subcellular location is the cytoplasm. It carries out the reaction tRNA(Ser) + L-serine + ATP = L-seryl-tRNA(Ser) + AMP + diphosphate + H(+). The enzyme catalyses tRNA(Sec) + L-serine + ATP = L-seryl-tRNA(Sec) + AMP + diphosphate + H(+). It functions in the pathway aminoacyl-tRNA biosynthesis; selenocysteinyl-tRNA(Sec) biosynthesis; L-seryl-tRNA(Sec) from L-serine and tRNA(Sec): step 1/1. Functionally, catalyzes the attachment of serine to tRNA(Ser). Is also able to aminoacylate tRNA(Sec) with serine, to form the misacylated tRNA L-seryl-tRNA(Sec), which will be further converted into selenocysteinyl-tRNA(Sec). This chain is Serine--tRNA ligase, found in Paracidovorax citrulli (strain AAC00-1) (Acidovorax citrulli).